The chain runs to 108 residues: Peptidyl-prolyl cis-trans isomerase FKBP1A (108 aa).

Positions 20–108 (GQTVVVHYVG…TFDVELLRLE (89 aa)) constitute a PPIase FKBP-type domain.

This sequence belongs to the FKBP-type PPIase family. FKBP1 subfamily.

It localises to the cytoplasm. The catalysed reaction is [protein]-peptidylproline (omega=180) = [protein]-peptidylproline (omega=0). Inhibited by both FK506 and rapamycin. In terms of biological role, keeps in an inactive conformation TGFBR1, the TGF-beta type I serine/threonine kinase receptor, preventing TGF-beta receptor activation in absence of ligand. May modulate the RYR1 calcium channel activity. PPIases accelerate the folding of proteins. It catalyzes the cis-trans isomerization of proline imidic peptide bonds in oligopeptides. This chain is Peptidyl-prolyl cis-trans isomerase FKBP1A (fkbp1a), found in Xenopus laevis (African clawed frog).